Here is a 471-residue protein sequence, read N- to C-terminus: Fructokinase-like 1, chloroplastic (471 aa).

The transit peptide at 1–38 (MASLLIFPHLHHFDSSLDRREVLVVRHSQASRRFLTPK) directs the protein to the chloroplast. Residues 36 to 85 (TPKASINGSGITNGAAAETTSKPSRKGRKKKQTSTVIEKDNTETDPELNP) form a disordered region. A compositionally biased stretch (polar residues) spans 39-57 (ASINGSGITNGAAAETTSK). A compositionally biased stretch (basic residues) spans 58-67 (PSRKGRKKKQ).

The protein belongs to the carbohydrate kinase PfkB family. As to quaternary structure, interacts with CITRX/TRXz. Interacts with PTAC7. Self-interacts. Binds to FLN2. Associates with the plastid-encoded RNA polymerase (PEP) complex.

Its subcellular location is the plastid. The protein localises to the chloroplast. Its function is as follows. Required for proper chloroplast development, most likely through regulating plastid-encoded polymerase (PEP) dependent chloroplast transcription. Acts as a component of the transcriptionally active plastid chromosome that is required for plastid gene expression. In Arabidopsis thaliana (Mouse-ear cress), this protein is Fructokinase-like 1, chloroplastic.